Reading from the N-terminus, the 571-residue chain is E3 ubiquitin-protein ligase CHFR (571 aa).

The interval 1 to 21 (MERPEEGKQSPPPQPWGRLLR) is disordered. The 52-residue stretch at 38–89 (WTIGRRRGCDLSFPSNKLVSGDHCRIAVDEKSGQVTLEDTSTSGTVINKLKV) folds into the FHA domain. The tract at residues 113–138 (EHRSGGGGISPKGSGPSVASDEVSSF) is disordered. Serine 152 is subject to Phosphoserine. The RING-type zinc-finger motif lies at 212 to 251 (CIICQDLLHDCVSLQPCMHTFCAACYSGWMERSSLCPTCR). Threonine 294 carries the post-translational modification Phosphothreonine. Residues 297 to 325 (MLQPKVRRSFSDEEGSSEDLLELSDVDSE) form a disordered region. The segment covering 308–325 (DEEGSSEDLLELSDVDSE) has biased composition (acidic residues). The PBZ-type zinc-finger motif lies at 540-562 (PDCYWGRNCRTQVKAHHAMKFNH).

This sequence belongs to the CHFR family. In terms of assembly, interacts with HDAC1 and HDAC2. Interacts with PML (with sumoylated form of PML). Post-translationally, poly-ADP-ribosylated. In addition to binding non covalently poly(ADP-ribose) via its PBZ-type zinc finger, the protein is also covalently poly-ADP-ribosylated by PARP1. Autoubiquitinated; may regulate its cellular level. In terms of processing, phosphorylated by PKB. Phosphorylation may affect its E3 ligase activity.

It localises to the nucleus. The protein resides in the PML body. It carries out the reaction S-ubiquitinyl-[E2 ubiquitin-conjugating enzyme]-L-cysteine + [acceptor protein]-L-lysine = [E2 ubiquitin-conjugating enzyme]-L-cysteine + N(6)-ubiquitinyl-[acceptor protein]-L-lysine.. It functions in the pathway protein modification; protein ubiquitination. In terms of biological role, E3 ubiquitin-protein ligase that functions in the antephase checkpoint by actively delaying passage into mitosis in response to microtubule poisons. Acts in early prophase before chromosome condensation, when the centrosome move apart from each other along the periphery of the nucleus. Probably involved in signaling the presence of mitotic stress caused by microtubule poisons by mediating the 'Lys-48'-linked ubiquitination of target proteins, leading to their degradation by the proteasome. Promotes the ubiquitination and subsequent degradation of AURKA and PLK1. Probably acts as a tumor suppressor, possibly by mediating the polyubiquitination of HDAC1, leading to its degradation. May also promote the formation of 'Lys-63'-linked polyubiquitin chains and functions with the specific ubiquitin-conjugating UBC13-MMS2 (UBE2N-UBE2V2) heterodimer. Substrates that are polyubiquitinated at 'Lys-63' are usually not targeted for degradation, but are rather involved in signaling cellular stress. The sequence is that of E3 ubiquitin-protein ligase CHFR (CHFR) from Pongo abelii (Sumatran orangutan).